The primary structure comprises 913 residues: Protein translocase subunit SecA (913 aa).

ATP-binding positions include glutamine 87, 105–109 (GEGKT), and aspartate 512. Zn(2+) is bound by residues cysteine 897, cysteine 899, cysteine 908, and histidine 909.

It belongs to the SecA family. As to quaternary structure, monomer and homodimer. Part of the essential Sec protein translocation apparatus which comprises SecA, SecYEG and auxiliary proteins SecDF-YajC and YidC. The cofactor is Zn(2+).

It is found in the cell inner membrane. The protein localises to the cytoplasm. It carries out the reaction ATP + H2O + cellular proteinSide 1 = ADP + phosphate + cellular proteinSide 2.. In terms of biological role, part of the Sec protein translocase complex. Interacts with the SecYEG preprotein conducting channel. Has a central role in coupling the hydrolysis of ATP to the transfer of proteins into and across the cell membrane, serving both as a receptor for the preprotein-SecB complex and as an ATP-driven molecular motor driving the stepwise translocation of polypeptide chains across the membrane. In Pseudomonas savastanoi pv. phaseolicola (strain 1448A / Race 6) (Pseudomonas syringae pv. phaseolicola (strain 1448A / Race 6)), this protein is Protein translocase subunit SecA.